A 206-amino-acid polypeptide reads, in one-letter code: Max dimerization protein 3 (206 aa).

Positions 8-25 are interaction with SIN3A and SIN3B; that stretch reads IQVLLQAAEFLERREREA. Disordered stretches follow at residues 29–66 and 122–171; these read YASL…NELE and KLRS…QEDL. The bHLH domain occupies 57–109; sequence SGRSVHNELEKRRRAQLKRCLEQLRQQMPLGVDCTRYTTLSLLRRARVHIQKL. Residues 126–138 show a composition bias toward low complexity; the sequence is KQQSLQQQLEQLQ. The span at 143-153 shows a compositional bias: basic and acidic residues; it reads ARERERLRADS.

Efficient DNA binding requires dimerization with another bHLH protein. Binds DNA as a heterodimer with MAX. Interacts with SIN3A AND SIN3B. Interacts with RNF17. Expressed only in the proliferating areas of the testis and thymus.

Its subcellular location is the nucleus. In terms of biological role, transcriptional repressor. Binds with MAX to form a sequence-specific DNA-binding protein complex which recognizes the core sequence 5'-CAC[GA]TG-3'. Antagonizes MYC transcriptional activity by competing for MAX and suppresses MYC dependent cell transformation. This chain is Max dimerization protein 3 (Mxd3), found in Mus musculus (Mouse).